Reading from the N-terminus, the 115-residue chain is Immunoglobulin kappa variable 5-48 (115 aa).

The first 20 residues, 1–20 (MVSTPQFLVFLLFWIPASRG), serve as a signal peptide directing secretion. The interval 21 to 43 (DILLTQSPAILSVSPGERVSFSC) is framework-1. Cysteines 43 and 108 form a disulfide. The complementarity-determining-1 stretch occupies residues 44–54 (RASQSIGTSIH). Residues 55 to 69 (WYQQRTNGSPRLLIK) form a framework-2 region. The tract at residues 70 to 76 (YASESIS) is complementarity-determining-2. The segment at 77–108 (GIPSRFSGSGSGTDFTLSINSVESEDIADYYC) is framework-3. Residues 109 to 115 (QQSNSWP) are complementarity-determining-3.

The chain is Immunoglobulin kappa variable 5-48 from Mus musculus (Mouse).